A 780-amino-acid polypeptide reads, in one-letter code: Pendrin (780 aa).

Over 1–87 (MAARDRRSEP…YRVKEWLLSD (87 aa)) the chain is Cytoplasmic. A helical transmembrane segment spans residues 88 to 108 (IISGVSTGLVGTLQGMAYALL). A topological domain (extracellular) is located at residue A109. The chain crosses the membrane as a helical span at residues 110–130 (AVPVQYGLYSAFFPILTYFVF). Topologically, residues 131–135 (GTSRH) are cytoplasmic. Residues 136–156 (ISVGPFPVVSLMVGSVVLSMA) form a helical membrane-spanning segment. Topologically, residues 157 to 191 (PDDHFLVPSGNGSTLNTTTLDTGTRDAARVLLAST) are extracellular. A helical transmembrane segment spans residues 192-212 (LTLLVGIIQLVFGGLQIGFIV). Residues 213 to 218 (RYLADP) are Cytoplasmic-facing. Residues 219 to 239 (LVGGFTTAAAFQVLVSQLKIV) form a helical membrane-spanning segment. Residues 240-263 (LNVSTKNYNGVLSIIYTLIEIFQN) are Extracellular-facing. The chain crosses the membrane as a helical span at residues 264–284 (IGDTNIADFIAGLLTIIVCMA). The Cytoplasmic portion of the chain corresponds to 285 to 295 (VKELNDRFKHK). A helical membrane pass occupies residues 296–316 (IPVPIPIEVIVTIIATAISYG). At 317-344 (ANLEANYNAGIVKSIPSGFLPPVLPSVG) the chain is on the extracellular side. A helical transmembrane segment spans residues 345 to 365 (LFSDMLAASFSIAVVAYAIAV). The Cytoplasmic segment spans residues 366–384 (SVGKVYATKHDYIIDGNQE). A helical transmembrane segment spans residues 385–405 (FIAFGISNVFSGFFSCFVATT). At 406–421 (ALSRTAVQESTGGKTQ) the chain is on the extracellular side. A helical transmembrane segment spans residues 422–442 (VAGLISAVIVMVAIVALGKLL). Over 443–448 (EPLQKS) the chain is Cytoplasmic. Residues 449–469 (VLAAVVIANLKGMFMQVCDVP) form a helical membrane-spanning segment. The Extracellular segment spans residues 470–486 (RLWKQNKTDAVIWVFTC). Residues 487-507 (IMSIILGLDLGLLAGLLFGLL) form a helical membrane-spanning segment. Topologically, residues 508–780 (TVVLRVQFPS…QDEAMRRLAS (273 aa)) are cytoplasmic. The 195-residue stretch at 535 to 729 (HYKNLEEPEG…LTVHDAILYL (195 aa)) folds into the STAS domain.

Belongs to the SLC26A/SulP transporter (TC 2.A.53) family. Highly expressed in the kidney (at protein level).

Its subcellular location is the cell membrane. The protein resides in the apical cell membrane. It carries out the reaction chloride(in) = chloride(out). It catalyses the reaction iodide(out) = iodide(in). The enzyme catalyses hydrogencarbonate(in) + chloride(out) = hydrogencarbonate(out) + chloride(in). The catalysed reaction is iodide(in) + hydrogencarbonate(out) = iodide(out) + hydrogencarbonate(in). It carries out the reaction iodide(in) + chloride(out) = iodide(out) + chloride(in). It catalyses the reaction formate(in) + chloride(out) = formate(out) + chloride(in). Its function is as follows. Sodium-independent transporter of chloride and iodide. Mediates electroneutral chloride-bicarbonate and chloride-formate exchange with 1:1 stoichiometry. Mediates electroneutral iodide-chloride and iodide-bicarbonate exchange. In Rattus norvegicus (Rat), this protein is Pendrin (Slc26a4).